We begin with the raw amino-acid sequence, 449 residues long: Glutamate--tRNA ligase 1 (449 aa).

The short motif at 11-21 is the 'HIGH' region element; the sequence is PSPTGSLHVGN. The 'KMSKS' region motif lies at 242-246; it reads PLSKR. Position 245 (K245) interacts with ATP.

The protein belongs to the class-I aminoacyl-tRNA synthetase family. Glutamate--tRNA ligase type 1 subfamily. In terms of assembly, monomer.

It is found in the cytoplasm. The enzyme catalyses tRNA(Glu) + L-glutamate + ATP = L-glutamyl-tRNA(Glu) + AMP + diphosphate. Catalyzes the attachment of glutamate to tRNA(Glu) in a two-step reaction: glutamate is first activated by ATP to form Glu-AMP and then transferred to the acceptor end of tRNA(Glu). In Parvibaculum lavamentivorans (strain DS-1 / DSM 13023 / NCIMB 13966), this protein is Glutamate--tRNA ligase 1.